A 52-amino-acid polypeptide reads, in one-letter code: ATP synthase protein 8 (52 aa).

Residues 7 to 27 (MKWFLIYFIYLLIFYLFIMLI) form a helical membrane-spanning segment.

This sequence belongs to the ATPase protein 8 family. As to quaternary structure, F-type ATPases have 2 components, CF(1) - the catalytic core - and CF(0) - the membrane proton channel.

It is found in the mitochondrion membrane. Mitochondrial membrane ATP synthase (F(1)F(0) ATP synthase or Complex V) produces ATP from ADP in the presence of a proton gradient across the membrane which is generated by electron transport complexes of the respiratory chain. F-type ATPases consist of two structural domains, F(1) - containing the extramembraneous catalytic core and F(0) - containing the membrane proton channel, linked together by a central stalk and a peripheral stalk. During catalysis, ATP synthesis in the catalytic domain of F(1) is coupled via a rotary mechanism of the central stalk subunits to proton translocation. Part of the complex F(0) domain. Minor subunit located with subunit a in the membrane. This is ATP synthase protein 8 (mt:ATPase8) from Apis mellifera ligustica (Common honeybee).